A 642-amino-acid chain; its full sequence is Threonine--tRNA ligase (642 aa).

The region spanning 1-61 is the TGS domain; that stretch reads MPVITLPDGS…ENDATLSIIT (61 aa). The segment at 243 to 534 is catalytic; sequence DHRKIGKQLD…LTEEFAGFFP (292 aa). Residues Cys334, His385, and His511 each contribute to the Zn(2+) site.

The protein belongs to the class-II aminoacyl-tRNA synthetase family. Homodimer. Requires Zn(2+) as cofactor.

The protein resides in the cytoplasm. It catalyses the reaction tRNA(Thr) + L-threonine + ATP = L-threonyl-tRNA(Thr) + AMP + diphosphate + H(+). Catalyzes the attachment of threonine to tRNA(Thr) in a two-step reaction: L-threonine is first activated by ATP to form Thr-AMP and then transferred to the acceptor end of tRNA(Thr). Also edits incorrectly charged L-seryl-tRNA(Thr). This chain is Threonine--tRNA ligase, found in Salmonella agona (strain SL483).